Reading from the N-terminus, the 610-residue chain is UvrABC system protein C (610 aa).

Residues 16-94 enclose the GIY-YIG domain; the sequence is NQPGVYRMYN…IKQYLPKYNV (79 aa). In terms of domain architecture, UVR spans 204–239; the sequence is NQVLSILVEKMEQASRELRFEDAAKARDQIQAIRRV.

It belongs to the UvrC family. Interacts with UvrB in an incision complex.

The protein resides in the cytoplasm. Its function is as follows. The UvrABC repair system catalyzes the recognition and processing of DNA lesions. UvrC both incises the 5' and 3' sides of the lesion. The N-terminal half is responsible for the 3' incision and the C-terminal half is responsible for the 5' incision. The chain is UvrABC system protein C from Vibrio cholerae serotype O1 (strain ATCC 39315 / El Tor Inaba N16961).